Consider the following 500-residue polypeptide: Protein DML1 (500 aa).

The protein belongs to the misato family.

It is found in the mitochondrion. Functionally, involved in the partitioning of the mitochondrial organelle and mitochondrial DNA (mtDNA) inheritance. This is Protein DML1 (DML1) from Scheffersomyces stipitis (strain ATCC 58785 / CBS 6054 / NBRC 10063 / NRRL Y-11545) (Yeast).